Consider the following 473-residue polypeptide: Sulfhydrylase-like protein lolC2 (473 aa).

Residue lysine 226 is modified to N6-(pyridoxal phosphate)lysine.

It belongs to the trans-sulfuration enzymes family. It depends on pyridoxal 5'-phosphate as a cofactor.

It functions in the pathway alkaloid biosynthesis. Its function is as follows. Sulfhydrylase-like protein; part of the gene cluster that mediates the biosynthesis of loline alkaloids, potent insecticidal agents composed of a pyrrolizidine ring system and an uncommon ether bridge linking carbons 2 and 7. Lolines are structurally differentiated by the various modifications of the L-amino group and include norloline, loline, N-methylloline, N-acetylloline, N-acetylnorloline, and N-formylloline. The first committed step is the condensation of O-acetyl-L-homoserine (derived from L-aspartic acid) and L-proline, probably catalyzed by the gamma-type pyridoxal 5'-phosphate(PLP)-dependent enzyme lolC, to give the diamino diacid, NACPP. Ensuing cyclization, decarboxylation, and acetylation steps yield 1-exo-acetamidopyrrolizidine (AcAP). LolO is required for installation of the ether bridge upon the pathway intermediate, 1-exo-acetamidopyrrolizidine (AcAP). In sequential 2-oxoglutarate- and O(2)-consuming steps, lolO removes hydrogens from C2 and C7 of AcAP to form both carbon-oxygen bonds in N-acetylnorloline (NANL), the precursor to all other lolines. The enzymes lolD, lolE, lolF and lolT have also been proposed to be involved in the ether-bridge installation. Further processing of the exocyclic moiety of NANL by fungal N-acetamidase (LolN), methyltransferase (LolM), and cytochrome P450 (LolP) enzymes, with occasional involvement of a plant acetyltransferase, generates the other known lolines. LolN transforms NANL to norlonine which is monomethylated and dimethylated to respectively lonine and N-methyllonine (NML) by lolM. LolP catalyzes hydroxylation of the methyl group in N-methylloline (NML) and further oxygenation to N-formylloline (NFL). A plant acetyltransferase is responsible for the acetylation of loline to form N-acetylloline (NAL). LolA might interact with aspartate kinase to prevent feedback inhibition of its activity by these end products and thereby promote production of L-homoserine from L-aspartate. This chain is Sulfhydrylase-like protein lolC2, found in Epichloe uncinata (Endophyte fungus).